Reading from the N-terminus, the 196-residue chain is Nucleoid occlusion factor SlmA (196 aa).

Positions 7 to 68 (SNRREEILQA…GLIEFIEEAL (62 aa)) constitute an HTH tetR-type domain. The segment at residues 31–50 (TTAKLAQQVGVSEAALYRHF) is a DNA-binding region (H-T-H motif). Residues 65-142 (EEALMSRINR…QLRQILRERK (78 aa)) are a coiled coil.

Belongs to the nucleoid occlusion factor SlmA family. In terms of assembly, homodimer. Interacts with FtsZ.

It localises to the cytoplasm. The protein resides in the nucleoid. Functionally, required for nucleoid occlusion (NO) phenomenon, which prevents Z-ring formation and cell division over the nucleoid. Acts as a DNA-associated cell division inhibitor that binds simultaneously chromosomal DNA and FtsZ, and disrupts the assembly of FtsZ polymers. SlmA-DNA-binding sequences (SBS) are dispersed on non-Ter regions of the chromosome, preventing FtsZ polymerization at these regions. The sequence is that of Nucleoid occlusion factor SlmA from Vibrio vulnificus (strain CMCP6).